The primary structure comprises 940 residues: Isoleucine--tRNA ligase (940 aa).

The 'HIGH' region motif lies at Pro58–His68. Glu564 is an L-isoleucyl-5'-AMP binding site. Positions Lys605–Ser609 match the 'KMSKS' region motif. Lys608 provides a ligand contact to ATP. Zn(2+)-binding residues include Cys903, Cys906, Cys923, and Cys926.

Belongs to the class-I aminoacyl-tRNA synthetase family. IleS type 1 subfamily. Monomer. Zn(2+) is required as a cofactor.

The protein localises to the cytoplasm. It catalyses the reaction tRNA(Ile) + L-isoleucine + ATP = L-isoleucyl-tRNA(Ile) + AMP + diphosphate. In terms of biological role, catalyzes the attachment of isoleucine to tRNA(Ile). As IleRS can inadvertently accommodate and process structurally similar amino acids such as valine, to avoid such errors it has two additional distinct tRNA(Ile)-dependent editing activities. One activity is designated as 'pretransfer' editing and involves the hydrolysis of activated Val-AMP. The other activity is designated 'posttransfer' editing and involves deacylation of mischarged Val-tRNA(Ile). The polypeptide is Isoleucine--tRNA ligase (Shewanella amazonensis (strain ATCC BAA-1098 / SB2B)).